The sequence spans 366 residues: Ribosomal RNA large subunit methyltransferase M (366 aa).

Residues serine 187, 220–223, aspartate 239, aspartate 259, and aspartate 276 each bind S-adenosyl-L-methionine; that span reads SPGG. The active-site Proton acceptor is lysine 305.

The protein belongs to the class I-like SAM-binding methyltransferase superfamily. RNA methyltransferase RlmE family. RlmM subfamily. In terms of assembly, monomer.

It localises to the cytoplasm. The enzyme catalyses cytidine(2498) in 23S rRNA + S-adenosyl-L-methionine = 2'-O-methylcytidine(2498) in 23S rRNA + S-adenosyl-L-homocysteine + H(+). Catalyzes the 2'-O-methylation at nucleotide C2498 in 23S rRNA. This chain is Ribosomal RNA large subunit methyltransferase M, found in Tolumonas auensis (strain DSM 9187 / NBRC 110442 / TA 4).